The chain runs to 71 residues: Putative antitoxin VapB14 (71 aa).

In terms of biological role, putative antitoxin component of a possible type II toxin-antitoxin (TA) system. The cognate toxin is VapB14. The sequence is that of Putative antitoxin VapB14 (vapB14) from Mycobacterium tuberculosis (strain ATCC 25618 / H37Rv).